We begin with the raw amino-acid sequence, 135 residues long: MKLTARRQARELALQVLFQTEFAPQISYQTFLEVFEQSLDPEVITYADLIVTGVKSNKEAIDSKIQASSAHWKVERMATIDRNILRIAVYEMRFAADPIKENIAINEAVEIAKKYGTSDSGSFVNGLLDQVGKAH.

Belongs to the NusB family.

Involved in transcription antitermination. Required for transcription of ribosomal RNA (rRNA) genes. Binds specifically to the boxA antiterminator sequence of the ribosomal RNA (rrn) operons. This is Transcription antitermination protein NusB from Bdellovibrio bacteriovorus (strain ATCC 15356 / DSM 50701 / NCIMB 9529 / HD100).